The following is a 312-amino-acid chain: Peroxidase (312 aa).

Positions 1 to 23 are cleaved as a signal peptide; the sequence is MAMGSASCISLVVLVALATAASG. At Gln24 the chain carries Pyrrolidone carboxylic acid. Cystine bridges form between Cys34-Cys107, Cys67-Cys70, Cys113-Cys307, and Cys192-Cys218. His65 serves as the catalytic Proton acceptor. Positions 66, 69, 71, and 73 each coordinate Ca(2+). Pro155 contributes to the substrate binding site. Position 185 (His185) interacts with heme b. Residue Thr186 participates in Ca(2+) binding. Positions 231, 234, and 239 each coordinate Ca(2+). A glycan (N-linked (GlcNAc...) asparagine) is linked at Asn262.

This sequence belongs to the peroxidase family. Classical plant (class III) peroxidase subfamily. Requires Ca(2+) as cofactor. Heme b is required as a cofactor. Root.

The protein localises to the secreted. It catalyses the reaction 2 a phenolic donor + H2O2 = 2 a phenolic radical donor + 2 H2O. In terms of biological role, removal of H(2)O(2), oxidation of toxic reductants, biosynthesis and degradation of lignin, suberization, auxin catabolism, response to environmental stresses such as wounding, pathogen attack and oxidative stress. These functions might be dependent on each isozyme/isoform in each plant tissue. Its function is as follows. Involved in defense response to powdery meldew fungus. The protein is Peroxidase of Triticum aestivum (Wheat).